The primary structure comprises 152 residues: Snaclec 5 (152 aa).

The first 23 residues, methionine 1–alanine 23, serve as a signal peptide directing secretion. 3 disulfide bridges follow: cysteine 27-cysteine 38, cysteine 55-cysteine 148, and cysteine 123-cysteine 140. In terms of domain architecture, C-type lectin spans tyrosine 34–lysine 149.

Belongs to the snaclec family. As to quaternary structure, heterodimer; disulfide-linked. Expressed by the venom gland.

It localises to the secreted. Interferes with one step of hemostasis (modulation of platelet aggregation, or coagulation cascade, for example). The sequence is that of Snaclec 5 from Bitis arietans (African puff adder).